Reading from the N-terminus, the 1124-residue chain is Phytochrome type A (1124 aa).

Residues 1-19 (MSTTRPSQSSNNSGRSRNS) show a composition bias toward low complexity. Residues 1–21 (MSTTRPSQSSNNSGRSRNSAR) form a disordered region. One can recognise a GAF domain in the interval 218–401 (SMERLCDTMV…VFAIHVNKEI (184 aa)). Residue cysteine 323 coordinates phytochromobilin. 2 PAS domains span residues 617 to 687 (VTSE…LQGE) and 750 to 821 (DYKA…VNFG). Residues 901-1120 (YMKRQIRNPL…ILSVELAAAH (220 aa)) enclose the Histidine kinase domain.

It belongs to the phytochrome family. Homodimer. Contains one covalently linked phytochromobilin chromophore.

Functionally, regulatory photoreceptor which exists in two forms that are reversibly interconvertible by light: the Pr form that absorbs maximally in the red region of the spectrum and the Pfr form that absorbs maximally in the far-red region. Photoconversion of Pr to Pfr induces an array of morphogenic responses, whereas reconversion of Pfr to Pr cancels the induction of those responses. Pfr controls the expression of a number of nuclear genes including those encoding the small subunit of ribulose-bisphosphate carboxylase, chlorophyll A/B binding protein, protochlorophyllide reductase, rRNA, etc. It also controls the expression of its own gene(s) in a negative feedback fashion. In Lathyrus sativus (White vetchling), this protein is Phytochrome type A (PHYA).